The primary structure comprises 205 residues: Fe/S biogenesis protein NfuA (205 aa).

[4Fe-4S] cluster contacts are provided by C162 and C165.

Belongs to the NfuA family. In terms of assembly, homodimer. Requires [4Fe-4S] cluster as cofactor.

Functionally, involved in iron-sulfur cluster biogenesis. Binds a 4Fe-4S cluster, can transfer this cluster to apoproteins, and thereby intervenes in the maturation of Fe/S proteins. Could also act as a scaffold/chaperone for damaged Fe/S proteins. This chain is Fe/S biogenesis protein NfuA, found in Blochmanniella floridana.